The primary structure comprises 602 residues: Probable translation initiation factor IF-2 (602 aa).

Positions 9–229 (LRQPIVVVLG…GLTQNYMKNK (221 aa)) constitute a tr-type G domain. The segment at 18-25 (GHVDHGKT) is G1. Residue 18–25 (GHVDHGKT) participates in GTP binding. Positions 43 to 47 (EMTQE) are G2. Positions 82 to 85 (DTPG) are G3. Residues 82 to 86 (DTPGH) and 136 to 139 (NKID) each bind GTP. The segment at 136–139 (NKID) is G4. A G5 region spans residues 204-206 (SAK).

The protein belongs to the TRAFAC class translation factor GTPase superfamily. Classic translation factor GTPase family. IF-2 subfamily.

Function in general translation initiation by promoting the binding of the formylmethionine-tRNA to ribosomes. Seems to function along with eIF-2. The protein is Probable translation initiation factor IF-2 (infB) of Sulfolobus acidocaldarius (strain ATCC 33909 / DSM 639 / JCM 8929 / NBRC 15157 / NCIMB 11770).